The primary structure comprises 234 residues: Probable GTP-binding protein EngB (234 aa).

The region spanning 23 to 209 is the EngB-type G domain; that stretch reads AVPEVAFAGR…QRTVAGWLCL (187 aa). GTP contacts are provided by residues 31–38, 58–62, 82–85, 149–152, and 187–190; these read GRSNAGKS, GRTQH, DLPG, TKAD, and LFSS. Residues Ser-38 and Thr-60 each coordinate Mg(2+). Positions 210-234 are disordered; it reads PEAMPPSPDAEPAKKTPSPDAQRGE.

The protein belongs to the TRAFAC class TrmE-Era-EngA-EngB-Septin-like GTPase superfamily. EngB GTPase family. Mg(2+) is required as a cofactor.

Functionally, necessary for normal cell division and for the maintenance of normal septation. In Ralstonia nicotianae (strain ATCC BAA-1114 / GMI1000) (Ralstonia solanacearum), this protein is Probable GTP-binding protein EngB.